The sequence spans 356 residues: MATQRKIIHIDMDCFYAAIEMRENPALIGKPVAVGGSVEGRGVLTTCNYEARKFGLHSAMPTAQALKRCPNLILVPVNMPLYKAVSEQIHQIFRRYTDIVELLSLDEAYLDVTDCRQCSGSATWIAQEIRDAIWNELHLTASAGIAPLKFLAKIASDQNKPNGQFVISPENMTAFIYDLPLKKIPRVGKVTNEKLAQLGLHTCGDIQHSDKAFIYKTFGKFGQRLWEFSHAIDNRKIEANRPRKSLAVENTLPTDIWHLAEAEQIVDELFKKLVFRLQRNWGERSLQEFKKLAIKLKFGDFTQTTLERTTDGLSRERFIELLQQVWQRTNRRSVRLIGLSVHYPTEKVKKQLNLWE.

Positions 7–188 (IIHIDMDCFY…LPLKKIPRVG (182 aa)) constitute a UmuC domain. 2 residues coordinate Mg(2+): D11 and D106. E107 is an active-site residue.

It belongs to the DNA polymerase type-Y family. As to quaternary structure, monomer. Mg(2+) serves as cofactor.

It localises to the cytoplasm. It carries out the reaction DNA(n) + a 2'-deoxyribonucleoside 5'-triphosphate = DNA(n+1) + diphosphate. In terms of biological role, poorly processive, error-prone DNA polymerase involved in untargeted mutagenesis. Copies undamaged DNA at stalled replication forks, which arise in vivo from mismatched or misaligned primer ends. These misaligned primers can be extended by PolIV. Exhibits no 3'-5' exonuclease (proofreading) activity. May be involved in translesional synthesis, in conjunction with the beta clamp from PolIII. The polypeptide is DNA polymerase IV (Actinobacillus pleuropneumoniae serotype 5b (strain L20)).